The following is a 324-amino-acid chain: Esterase FPSE_08126 (324 aa).

Active-site residues include Ser156, Asp255, and His285.

This sequence belongs to the AB hydrolase 3 family.

In terms of biological role, esterase; part of the Fusarium detoxification of benzoxazolinone cluster involved in the degradation of benzoxazolinones produced by the host plant. Maize, wheat, and rye produce the 2 benzoxazinone phytoanticipins 2,4-dihy-droxy-7-methoxy-1,4-benzoxazin-3-one (DIMBOA) and 2,4-dihydroxy-1,4-benzoxazin-3-one (DIBOA) that, due to their inherent instability once released, spontaneously degrade to the more stable corresponding benzoxazolinones, 6-methoxy-2-benzoxazolinone (MBOA) and 2-benzoxazolinone (BOA), respectively. The first step in the detoxification of benzoxazolinones involves the hydrolysis of the cyclic ester bond of benzoxazolinones by the gamma-lactamase FDB1 to aminophenols. FDB1 is able to convert 2-benzoxazolinone (BOA) into 2-aminophenol (2-AP), as well as 6-methoxy-2-benzoxazolinone (MBOA) into 5-methoxy-2-aminophenol (2-AMP). The N-malonyltransferase FDB2 then metabolizes aminophenols via N-malonylation to non-toxic malonamic acids. FDB2 converts 2-AP into N-(2-hydroxyphenyl) malonamic acid (HPMA) and 2-AMP into N-(2-hydroxy-4-methoxyphenyl) malonamic acid (HMPMA). The cluster also contains 2 transcription factors (FDB3 and FPSE_08121), an aldo-keto reductase (FPSE_08125) that possibly associates with a ketone component of BOA and MBOA degradation, an esterase (FPSE_08126), an acyl-CoA transferase (FPSE_08120), a solute carrier protein (FPSE_08119) and a transmembrane transporter (FPSE_08127) proposed to shuttle metabolites of benzoxazolinone degradation. The polypeptide is Esterase FPSE_08126 (Fusarium pseudograminearum (strain CS3096) (Wheat and barley crown-rot fungus)).